Here is a 304-residue protein sequence, read N- to C-terminus: NAD kinase (304 aa).

Asp77 functions as the Proton acceptor in the catalytic mechanism. NAD(+) contacts are provided by residues 77–78, Arg82, 151–152, Arg162, Asp181, and 192–197; these read DG, NE, and TAYSFS.

This sequence belongs to the NAD kinase family. The cofactor is a divalent metal cation.

The protein resides in the cytoplasm. The enzyme catalyses NAD(+) + ATP = ADP + NADP(+) + H(+). Involved in the regulation of the intracellular balance of NAD and NADP, and is a key enzyme in the biosynthesis of NADP. Catalyzes specifically the phosphorylation on 2'-hydroxyl of the adenosine moiety of NAD to yield NADP. This is NAD kinase from Leifsonia xyli subsp. xyli (strain CTCB07).